We begin with the raw amino-acid sequence, 75 residues long: Acyl carrier protein (75 aa).

The region spanning Met1–Gln75 is the Carrier domain. Ser35 is subject to O-(pantetheine 4'-phosphoryl)serine.

The protein belongs to the acyl carrier protein (ACP) family. Post-translationally, 4'-phosphopantetheine is transferred from CoA to a specific serine of apo-ACP by AcpS. This modification is essential for activity because fatty acids are bound in thioester linkage to the sulfhydryl of the prosthetic group.

It localises to the cytoplasm. The protein operates within lipid metabolism; fatty acid biosynthesis. In terms of biological role, carrier of the growing fatty acid chain in fatty acid biosynthesis. The chain is Acyl carrier protein from Desulfitobacterium hafniense (strain Y51).